Reading from the N-terminus, the 276-residue chain is MPIDNLPPLREVINAYGLQANKSLGQNFLFDLNLTSKIARQAGNIEGKPVIEIGPGPGGLTRALLAKGAIVTVIERDKRCLPALLEIEKHYPKKLNLIFDDALKQDLSKLSETYPEKPRIIANLPYNIGTQLLLNWLLTTSWPPFYESMTLMFQREVAKRITATPQSPHYSRLSVLAGWRTIAKIAFDVPPQAFIPAPKVTSSVINIIPRPQPLACSVQKLSLVTKVAFGEKRKMLRQSLKTIGGKELLEKAGIDETRRAETLLIPEFITLANLMT.

6 residues coordinate S-adenosyl-L-methionine: Asn27, Leu29, Gly54, Glu75, Asp101, and Asn123.

This sequence belongs to the class I-like SAM-binding methyltransferase superfamily. rRNA adenine N(6)-methyltransferase family. RsmA subfamily.

The protein resides in the cytoplasm. It carries out the reaction adenosine(1518)/adenosine(1519) in 16S rRNA + 4 S-adenosyl-L-methionine = N(6)-dimethyladenosine(1518)/N(6)-dimethyladenosine(1519) in 16S rRNA + 4 S-adenosyl-L-homocysteine + 4 H(+). Functionally, specifically dimethylates two adjacent adenosines (A1518 and A1519) in the loop of a conserved hairpin near the 3'-end of 16S rRNA in the 30S particle. May play a critical role in biogenesis of 30S subunits. This is Ribosomal RNA small subunit methyltransferase A from Bartonella bacilliformis (strain ATCC 35685 / KC583 / Herrer 020/F12,63).